The chain runs to 502 residues: Probable cytosol aminopeptidase (502 aa).

Residues Lys269 and Asp274 each coordinate Mn(2+). Lys281 is an active-site residue. Asp292, Asp351, and Glu353 together coordinate Mn(2+). The active site involves Arg355.

This sequence belongs to the peptidase M17 family. Requires Mn(2+) as cofactor.

It localises to the cytoplasm. It carries out the reaction Release of an N-terminal amino acid, Xaa-|-Yaa-, in which Xaa is preferably Leu, but may be other amino acids including Pro although not Arg or Lys, and Yaa may be Pro. Amino acid amides and methyl esters are also readily hydrolyzed, but rates on arylamides are exceedingly low.. The catalysed reaction is Release of an N-terminal amino acid, preferentially leucine, but not glutamic or aspartic acids.. Presumably involved in the processing and regular turnover of intracellular proteins. Catalyzes the removal of unsubstituted N-terminal amino acids from various peptides. The sequence is that of Probable cytosol aminopeptidase from Shewanella loihica (strain ATCC BAA-1088 / PV-4).